The sequence spans 335 residues: Dihydroorotate dehydrogenase (quinone) (335 aa).

FMN contacts are provided by residues 59–63 and threonine 83; that span reads AGLDK. Residue lysine 63 coordinates substrate. 108–112 contacts substrate; the sequence is NRMGF. FMN is bound by residues asparagine 136 and asparagine 169. A substrate-binding site is contributed by asparagine 169. Residue serine 172 is the Nucleophile of the active site. Asparagine 174 lines the substrate pocket. FMN contacts are provided by lysine 214 and threonine 242. 243 to 244 serves as a coordination point for substrate; the sequence is NT. FMN-binding positions include glycine 265, glycine 294, and 315-316; that span reads YS.

It belongs to the dihydroorotate dehydrogenase family. Type 2 subfamily. In terms of assembly, monomer. It depends on FMN as a cofactor.

The protein resides in the cell membrane. The catalysed reaction is (S)-dihydroorotate + a quinone = orotate + a quinol. The protein operates within pyrimidine metabolism; UMP biosynthesis via de novo pathway; orotate from (S)-dihydroorotate (quinone route): step 1/1. Catalyzes the conversion of dihydroorotate to orotate with quinone as electron acceptor. The protein is Dihydroorotate dehydrogenase (quinone) of Neisseria meningitidis serogroup C / serotype 2a (strain ATCC 700532 / DSM 15464 / FAM18).